Here is a 142-residue protein sequence, read N- to C-terminus: Large ribosomal subunit protein uL13 (142 aa).

This sequence belongs to the universal ribosomal protein uL13 family. Part of the 50S ribosomal subunit.

Its function is as follows. This protein is one of the early assembly proteins of the 50S ribosomal subunit, although it is not seen to bind rRNA by itself. It is important during the early stages of 50S assembly. The polypeptide is Large ribosomal subunit protein uL13 (Nitrosococcus oceani (strain ATCC 19707 / BCRC 17464 / JCM 30415 / NCIMB 11848 / C-107)).